The chain runs to 128 residues: Large ribosomal subunit protein eL22 (128 aa).

A Phosphothreonine modification is found at threonine 62. Residue serine 66 is modified to Phosphoserine. Lysine 69 carries the post-translational modification N6-succinyllysine.

Belongs to the eukaryotic ribosomal protein eL22 family. In terms of assembly, component of the large ribosomal subunit.

The protein resides in the cytoplasm. In terms of biological role, component of the large ribosomal subunit. The ribosome is a large ribonucleoprotein complex responsible for the synthesis of proteins in the cell. In Rattus norvegicus (Rat), this protein is Large ribosomal subunit protein eL22 (Rpl22).